Here is a 609-residue protein sequence, read N- to C-terminus: Mitochondrial nucleoid-associated protein 1 (609 aa).

At 1-552 (MSDNPPRMEV…IRCNTTIRKS (552 aa)) the chain is on the mitochondrial matrix side. Disordered regions lie at residues 142 to 168 (ASEKTSPKRELAKDLPKSGESRCNPSE), 183 to 202 (SNQDRKYSSTLPNDVQTTSG), and 410 to 441 (QLSLEPKSDSQFQASHTGCQSPLCSAQRHTPQ). Positions 146–161 (TSPKRELAKDLPKSGE) are enriched in basic and acidic residues. The segment covering 418 to 441 (DSQFQASHTGCQSPLCSAQRHTPQ) has biased composition (polar residues). Residues 553–573 (GFGGITMLFTGYFVLCCSWSF) form a helical membrane-spanning segment. Over 574 to 609 (RRLKKLCRPLPWKSTVPPCIGVAKTTGDCRSKTCLD) the chain is Mitochondrial intermembrane.

The protein localises to the mitochondrion inner membrane. It localises to the mitochondrion matrix. It is found in the mitochondrion nucleoid. Its function is as follows. Critical regulator of mitochondrial DNA (mtDNA) abundance. Binds dsDNA throughout the mitochondrial genome without sequence specificity and controls mtDNA copy number by promoting its replication. Also plays important roles in mitochondrial metabolism and cell proliferation. This Homo sapiens (Human) protein is Mitochondrial nucleoid-associated protein 1.